Reading from the N-terminus, the 56-residue chain is Small ribosomal subunit protein uS14 (56 aa).

4 residues coordinate Zn(2+): Cys21, Cys24, Cys39, and Cys42.

This sequence belongs to the universal ribosomal protein uS14 family. Zinc-binding uS14 subfamily. As to quaternary structure, part of the 30S ribosomal subunit. It depends on Zn(2+) as a cofactor.

Its function is as follows. Binds 16S rRNA, required for the assembly of 30S particles. In Pyrococcus furiosus (strain ATCC 43587 / DSM 3638 / JCM 8422 / Vc1), this protein is Small ribosomal subunit protein uS14.